The following is an 83-amino-acid chain: Apolipoprotein C-I, acidic form (83 aa).

The first 26 residues, 1 to 26 (MRLFLSLPVLVVVLSMVLEGPAPAQG), serve as a signal peptide directing secretion.

Belongs to the apolipoprotein C1 family.

Its subcellular location is the secreted. Functionally, inhibitor of lipoprotein binding to the low density lipoprotein (LDL) receptor, LDL receptor-related protein, and very low density lipoprotein (VLDL) receptor. Associates with high density lipoproteins (HDL) and the triacylglycerol-rich lipoproteins in the plasma and makes up about 10% of the protein of the VLDL and 2% of that of HDL. Appears to interfere directly with fatty acid uptake and is also the major plasma inhibitor of cholesteryl ester transfer protein (CETP). Binds free fatty acids and reduces their intracellular esterification. Modulates the interaction of APOE with beta-migrating VLDL and inhibits binding of beta-VLDL to the LDL receptor-related protein. The polypeptide is Apolipoprotein C-I, acidic form (APOC1A) (Pongo abelii (Sumatran orangutan)).